Reading from the N-terminus, the 3903-residue chain is Centrin-binding protein SFI1 (3903 aa).

N159 and N1728 each carry an N-linked (GlcNAc...) asparagine glycan.

In terms of assembly, interacts with CEN1.

The protein localises to the cytoplasm. It is found in the cytoskeleton. It localises to the microtubule organizing center. Its subcellular location is the centrosome. Its function is as follows. Part of the centrosome outer core complex. Plays a role in the initiation and assembly of daughter buds. This is Centrin-binding protein SFI1 from Toxoplasma gondii (strain ATCC 50611 / Me49).